The primary structure comprises 358 residues: Alanine racemase (358 aa).

Lysine 34 functions as the Proton acceptor; specific for D-alanine in the catalytic mechanism. The residue at position 34 (lysine 34) is an N6-(pyridoxal phosphate)lysine. Arginine 129 provides a ligand contact to substrate. Tyrosine 254 acts as the Proton acceptor; specific for L-alanine in catalysis. Substrate is bound at residue methionine 302.

The protein belongs to the alanine racemase family. It depends on pyridoxal 5'-phosphate as a cofactor.

The catalysed reaction is L-alanine = D-alanine. Its pathway is amino-acid biosynthesis; D-alanine biosynthesis; D-alanine from L-alanine: step 1/1. Its function is as follows. Catalyzes the interconversion of L-alanine and D-alanine. May also act on other amino acids. The sequence is that of Alanine racemase (alr) from Hamiltonella defensa subsp. Acyrthosiphon pisum (strain 5AT).